The following is a 339-amino-acid chain: Uricase (339 aa).

Active-site charge relay system residues include Lys-33 and Thr-78. 7 residues coordinate urate: Thr-78, Asp-79, Phe-201, Arg-218, Val-266, Gln-267, and Asn-293. The Charge relay system role is filled by His-295. The short motif at 337–339 (SHL) is the Microbody targeting signal element.

This sequence belongs to the uricase family.

It is found in the peroxisome. It carries out the reaction urate + O2 + H2O = 5-hydroxyisourate + H2O2. It participates in purine metabolism; urate degradation; (S)-allantoin from urate: step 1/3. In terms of biological role, catalyzes the oxidation of uric acid to 5-hydroxyisourate, which is further processed to form (S)-allantoin. In Drosophila subobscura (Fruit fly), this protein is Uricase (Uro).